We begin with the raw amino-acid sequence, 456 residues long: Gamma-aminobutyric acid receptor subunit alpha-1 (456 aa).

Positions 1 to 27 (MRKSPGLSDCLWAWILLLSTLTGRSYG) are cleaved as a signal peptide. Residues 28-253 (QPSLQDELKD…FHLKRKIGYF (226 aa)) are Extracellular-facing. N-linked (GlcNAc...) asparagine glycosylation occurs at asparagine 38. Arginine 94 serves as a coordination point for 4-aminobutanoate. An N-linked (GlcNAc...) asparagine glycan is attached at asparagine 138. Threonine 157 contacts 4-aminobutanoate. Residues cysteine 166 and cysteine 180 are joined by a disulfide bond. The chain crosses the membrane as a helical span at residues 254-274 (VIQTYLPCIMTVILSQVSFWL). Residues 275 to 279 (NRESV) are Cytoplasmic-facing. A helical transmembrane segment spans residues 280-301 (PARTVFGVTTVLTMTTLSISAR). At 302–311 (NSLPKVAYAT) the chain is on the extracellular side. Residues 312-333 (AMDWFIAVCYAFVFSALIEFAT) form a helical membrane-spanning segment. Topologically, residues 334–421 (VNYFTKRGYA…TFNSVSKIDR (88 aa)) are cytoplasmic. The chain crosses the membrane as a helical span at residues 422-441 (LSRIAFPLLFGIFNLIYWAT). The Extracellular portion of the chain corresponds to 442 to 456 (YLNREPQLKAPTPHQ).

Belongs to the ligand-gated ion channel (TC 1.A.9) family. Gamma-aminobutyric acid receptor (TC 1.A.9.5) subfamily. GABRA1 sub-subfamily. As to quaternary structure, heteropentamer, formed by a combination of alpha (GABRA1-6), beta (GABRB1-3), gamma (GABRG1-3), delta (GABRD), epsilon (GABRE), rho (GABRR1-3), pi (GABRP) and theta (GABRQ) subunits, each subunit exhibiting distinct physiological and pharmacological properties. Interacts with UBQLN1. Interacts with TRAK1. Interacts with KIF21B. Identified in a complex of 720 kDa composed of LHFPL4, NLGN2, GABRA1, GABRB2, GABRG2 and GABRB3. Interacts with LHFPL4. Interacts with NLGN2. Interacts with SHISA7; interaction leads to the regulation of GABA(A) receptor trafficking, channel deactivation kinetics and pharmacology.

The protein localises to the postsynaptic cell membrane. It localises to the cell membrane. It is found in the cytoplasmic vesicle membrane. The catalysed reaction is chloride(in) = chloride(out). Allosterically activated by benzodiazepines, the neuroanesthetic alphaxalone and pentobarbital. Inhibited by the antagonist bicuculline. Potentiated by histamine. Its function is as follows. Alpha subunit of the heteropentameric ligand-gated chloride channel gated by gamma-aminobutyric acid (GABA), a major inhibitory neurotransmitter in the brain. GABA-gated chloride channels, also named GABA(A) receptors (GABAAR), consist of five subunits arranged around a central pore and contain GABA active binding site(s) located at the alpha and beta subunit interface(s). When activated by GABA, GABAARs selectively allow the flow of chloride anions across the cell membrane down their electrochemical gradient. Alpha-1/GABRA1-containing GABAARs are largely synaptic. Chloride influx into the postsynaptic neuron following GABAAR opening decreases the neuron ability to generate a new action potential, thereby reducing nerve transmission. GABAARs containing alpha-1 and beta-2 or -3 subunits exhibit synaptogenic activity; the gamma-2 subunit being necessary but not sufficient to induce rapid synaptic contacts formation. GABAARs function also as histamine receptor where histamine binds at the interface of two neighboring beta subunits and potentiates GABA response. GABAARs containing alpha, beta and epsilon subunits also permit spontaneous chloride channel activity while preserving the structural information required for GABA-gated openings. Alpha-1-mediated plasticity in the orbitofrontal cortex regulates context-dependent action selection. Together with rho subunits, may also control neuronal and glial GABAergic transmission in the cerebellum. In Pongo abelii (Sumatran orangutan), this protein is Gamma-aminobutyric acid receptor subunit alpha-1 (GABRA1).